Reading from the N-terminus, the 116-residue chain is Vesicle-associated membrane protein 2 (116 aa).

The tract at residues 1–33 is disordered; the sequence is MSATAATAPPAAPAGEGGPPAPPPNLTSNRRLQ. Ser-2 carries the N-acetylserine modification. Topologically, residues 2–94 are cytoplasmic; it reads SATAATAPPA…KRKYWWKNLK (93 aa). The v-SNARE coiled-coil homology domain maps to 31–91; it reads RLQQTQAQVD…AKLKRKYWWK (61 aa). The interval 92–116 is required for interaction with SEPT8; sequence NLKMMIILGVICAIILIIIIVYFST. A helical; Anchor for type IV membrane protein membrane pass occupies residues 95-114; that stretch reads MMIILGVICAIILIIIIVYF. Residues 115–116 lie on the Vesicular side of the membrane; that stretch reads ST.

It belongs to the synaptobrevin family. In terms of assembly, part of the SNARE core complex containing SNAP25, VAMP2 and STX1A; this complex constitutes the basic catalytic machinery of the complex neurotransmitter release apparatus. Recruited to the SNARE complex following binding of the SNARE complex component STX1A to STXBP1. This complex binds to CPLX1. Interacts with POPDC1 and STX4. Interacts with VAPA and VAPB. Interacts with WDFY2, PRKCZ and PRKCI. Forms a complex with WDFY2 and PRKCZ. Interacts (via N-terminus) with KCNB1 (via N-terminus and C-terminus); stimulates the channel inactivation rate of KCNB1. Interacts with SEPT8; the interaction inhibits interaction of VAMP2 with SYP. Interacts with SYP; the interaction is inhibited by interaction with SEPT8. Interacts with PICALM. Interacts with alpha-synuclein/SNCA. Interacts with STX3. In terms of processing, phosphorylated by PRKCZ in vitro and this phosphorylation is increased in the presence of WDFY2. Post-translationally, (Microbial infection) Targeted and hydrolyzed by C.botulinum neurotoxin type B (BoNT/B, botB) which hydrolyzes the 76-Gln-|-Phe-77 bond and probably inhibits neurotransmitter release. (Microbial infection) Targeted and hydrolyzed by C.botulinum neurotoxin type D (BoNT/D, botD) which probably hydrolyzes the 59-Lys-|-Leu-60 bond and inhibits neurotransmitter release. Note that humans are not known to be infected by C.botulinum type D. In terms of processing, (Microbial infection) Targeted and hydrolyzed by C.botulinum neurotoxin type F (BoNT/F, botF) which hydrolyzes the 58-Gln-|-Lys-59 bond and probably inhibits neurotransmitter release. Post-translationally, (Microbial infection) Targeted and hydrolyzed by C.tetani tetanus toxin (tetX) which hydrolyzes the 76-Gln-|-Phe-77 bond and probably inhibits neurotransmitter release. As to expression, nervous system and skeletal muscle.

It is found in the cytoplasmic vesicle. The protein localises to the secretory vesicle. The protein resides in the synaptic vesicle membrane. It localises to the cell membrane. In terms of biological role, involved in the targeting and/or fusion of transport vesicles to their target membrane. Major SNARE protein of synaptic vesicles which mediates fusion of synaptic vesicles to release neurotransmitters. Essential for fast vesicular exocytosis and activity-dependent neurotransmitter release as well as fast endocytosis that mediates rapid reuse of synaptic vesicles. Modulates the gating characteristics of the delayed rectifier voltage-dependent potassium channel KCNB1. The sequence is that of Vesicle-associated membrane protein 2 from Homo sapiens (Human).